A 476-amino-acid polypeptide reads, in one-letter code: Bifunctional protein HldE (476 aa).

Positions M1 to T318 are ribokinase. Residue N195–E198 coordinates ATP. Residue D264 is part of the active site. The interval M344–D476 is cytidylyltransferase.

The protein in the N-terminal section; belongs to the carbohydrate kinase PfkB family. It in the C-terminal section; belongs to the cytidylyltransferase family. Homodimer.

It carries out the reaction D-glycero-beta-D-manno-heptose 7-phosphate + ATP = D-glycero-beta-D-manno-heptose 1,7-bisphosphate + ADP + H(+). The enzyme catalyses D-glycero-beta-D-manno-heptose 1-phosphate + ATP + H(+) = ADP-D-glycero-beta-D-manno-heptose + diphosphate. Its pathway is nucleotide-sugar biosynthesis; ADP-L-glycero-beta-D-manno-heptose biosynthesis; ADP-L-glycero-beta-D-manno-heptose from D-glycero-beta-D-manno-heptose 7-phosphate: step 1/4. The protein operates within nucleotide-sugar biosynthesis; ADP-L-glycero-beta-D-manno-heptose biosynthesis; ADP-L-glycero-beta-D-manno-heptose from D-glycero-beta-D-manno-heptose 7-phosphate: step 3/4. It functions in the pathway bacterial outer membrane biogenesis; LOS core biosynthesis. Catalyzes the phosphorylation of D-glycero-D-manno-heptose 7-phosphate at the C-1 position to selectively form D-glycero-beta-D-manno-heptose-1,7-bisphosphate. In terms of biological role, catalyzes the ADP transfer from ATP to D-glycero-beta-D-manno-heptose 1-phosphate, yielding ADP-D-glycero-beta-D-manno-heptose. In Haemophilus influenzae (strain ATCC 51907 / DSM 11121 / KW20 / Rd), this protein is Bifunctional protein HldE.